A 333-amino-acid polypeptide reads, in one-letter code: MFRAAAPGQLRRAASLLRFQSTLVIAEHANDSLAPITLNTITAAGRLGGEVSCLVAGTKCDKVVQDLCKVAGVAKVLVAQHDAYKGLLPEELTPLILETQKQFSYTHICAGASAFGKNLLPRVAAKLNVAPVSDIIEIKSPDTFVRTIYAGNALCTVKCDEKVKVFSVRGTSFEAAAASGGSASSEKAPSSSSAGISEWLDQKLTKSDRPELTGAKVVVSGGRGLKSGENFKLLYDLADQLHAAVGASRAAVDAGFVPNDMQVGQTGKIVAPELYIAVGISGAIQHLAGMKDSKTIVAINKDPEAPIFQVADYGIVADLFKVVPEMTEILKKK.

The N-terminal 19 residues, 1–19 (MFRAAAPGQLRRAASLLRF), are a transit peptide targeting the mitochondrion. A domain I region spans residues 20–204 (QSTLVIAEHA…GISEWLDQKL (185 aa)). Lys-59 carries the post-translational modification N6-acetyllysine; alternate. Lys-59 bears the N6-succinyllysine; alternate mark. Residue Lys-62 is modified to N6-acetyllysine. Lys-69 is modified (N6-acetyllysine; alternate). The residue at position 69 (Lys-69) is an N6-succinyllysine; alternate. At Lys-75 the chain carries N6-acetyllysine. The residue at position 85 (Lys-85) is an N6-acetyllysine; alternate. At Lys-85 the chain carries N6-succinyllysine; alternate. A Phosphothreonine modification is found at Thr-93. N6-acetyllysine occurs at positions 101 and 139. The residue at position 140 (Ser-140) is a Phosphoserine. At Lys-158 the chain carries N6-acetyllysine; alternate. Lys-158 carries the post-translational modification N6-succinyllysine; alternate. Residue Lys-164 is modified to N6-acetyllysine. Lys-187 bears the N6-succinyllysine mark. Lys-203 is subject to N6-acetyllysine; alternate. Residue Lys-203 is modified to N6-succinyllysine; alternate. Positions 205–333 (TKSDRPELTG…PEMTEILKKK (129 aa)) are domain II. At Lys-216 the chain carries N6-succinyllysine. Position 223 (Arg-223) interacts with FAD. N6-acetyllysine; alternate occurs at positions 226 and 232. Lys-226 and Lys-232 each carry N6-succinyllysine; alternate. FAD-binding positions include Ser-248, 263–266 (VGQT), 281–286 (SGAIQH), and Asn-300. N6-succinyllysine is present on Lys-301. 318–319 (DL) provides a ligand contact to FAD.

Belongs to the ETF alpha-subunit/FixB family. Heterodimer composed of ETFA and ETFB. Identified in a complex that contains ETFA, ETFB and ETFRF1. Interaction with ETFRF1 promotes dissociation of the bound FAD and loss of electron transfer activity. Interacts with TASOR. FAD is required as a cofactor.

Its subcellular location is the mitochondrion matrix. Its function is as follows. Heterodimeric electron transfer flavoprotein that accepts electrons from several mitochondrial dehydrogenases, including acyl-CoA dehydrogenases, glutaryl-CoA and sarcosine dehydrogenase. It transfers the electrons to the main mitochondrial respiratory chain via ETF-ubiquinone oxidoreductase (ETF dehydrogenase). Required for normal mitochondrial fatty acid oxidation and normal amino acid metabolism. This chain is Electron transfer flavoprotein subunit alpha, mitochondrial (Etfa), found in Rattus norvegicus (Rat).